The sequence spans 855 residues: Receptor-like protein kinase THESEUS 1 (855 aa).

The signal sequence occupies residues 1–22 (MVFTKSLLVLLWFLSCYTTTTS). Residues 23–415 (SALFNPPDNY…GGSGSKSKKK (393 aa)) lie on the Extracellular side of the membrane. Residues Asn41, Asn64, Asn75, Asn114, Asn118, Asn136, Asn143, Asn154, Asn168, Asn225, Asn242, Asn288, Asn353, and Asn376 are each glycosylated (N-linked (GlcNAc...) asparagine). A helical membrane pass occupies residues 416–436 (AVIIGSLVGAVTLILLIAVCC). Residues 437–855 (YCCLVASRKQ…FSQLVHPRGR (419 aa)) lie on the Cytoplasmic side of the membrane. Positions 510–783 (FDESSLLGVG…GDVLWNLEYA (274 aa)) constitute a Protein kinase domain. ATP contacts are provided by residues 516–524 (LGVGGFGRV) and Lys538. Residue Asp634 is the Proton acceptor of the active site. Residues 822-855 (IDRGGVNSGTGTDDDAEDATTSAVFSQLVHPRGR) are disordered.

This sequence belongs to the protein kinase superfamily. Ser/Thr protein kinase family. Post-translationally, autophosphorylated. Expressed in most vegetative tissues, including leaves, stems and roots, primarily in expanding cells and vascular tissue.

It localises to the cell membrane. In terms of biological role, receptor-like protein kinase required for cell elongation during vegetative growth, mostly in a brassinosteroid-(BR-) independent manner. Mediates the response of growing plant cells to the perturbation of cellulose synthesis and may act as a cell-wall-integrity sensor. Controls ectopic-lignin accumulation in cellulose-deficient mutant backgrounds. This chain is Receptor-like protein kinase THESEUS 1 (THE1), found in Arabidopsis thaliana (Mouse-ear cress).